Here is a 630-residue protein sequence, read N- to C-terminus: Polygalacturonase-1 non-catalytic subunit beta (630 aa).

Positions 1–27 (MHTKIHLPPCILLLLLFSLPSFNVVVG) are cleaved as a signal peptide. Positions 28–108 (GDGESGNPFT…MCAPDLSPSL (81 aa)) are excised as a propeptide. Residues Asn-124, Asn-142, Asn-256, Asn-334, Asn-369, and Asn-387 are each glycosylated (N-linked (GlcNAc...) asparagine). The propeptide occupies 398 to 630 (EVNGGKKVNN…ENDMTWAIAD (233 aa)). Positions 415–629 (FFREKMLKSG…FENDMTWAIA (215 aa)) constitute a BURP domain.

Interacts with polygalacturonase-2 (isoenzymes PG2A and PG2B) to form heterodimers called polygalacturonase-1 (PG1). In terms of tissue distribution, mostly expressed in fruit pericarp. Also detected at low levels in cell wall of roots, leaves and flowers (at protein level).

It is found in the secreted. It localises to the extracellular space. The protein resides in the apoplast. The protein localises to the cell wall. Non-catalytic subunit of the polygalacturonase isozyme 1 (PG1). Necessary and sufficient to convert the polygalacturonase from its monomeric form PG2 to its heterodimeric form PG1. Seems to limit the depolymerization and solubilization of cell wall polyuronides mediated by PG2 during ripening, probably by recruiting PG2 to form PG1. The sequence is that of Polygalacturonase-1 non-catalytic subunit beta (GP1) from Solanum lycopersicum (Tomato).